A 197-amino-acid polypeptide reads, in one-letter code: Protein-methionine-sulfoxide reductase heme-binding subunit MsrQ (197 aa).

6 consecutive transmembrane segments (helical) span residues 10-30 (IFIV…MNLL), 42-62 (LGLG…LQKL), 75-95 (LGLW…FFIL), 110-130 (PYII…VTSN), 147-167 (LVYA…RSDL), and 169-189 (EWAI…PAVA).

It belongs to the MsrQ family. As to quaternary structure, heterodimer of a catalytic subunit (MsrP) and a heme-binding subunit (MsrQ). The cofactor is FMN. Heme b serves as cofactor.

It localises to the cell inner membrane. Its function is as follows. Part of the MsrPQ system that repairs oxidized periplasmic proteins containing methionine sulfoxide residues (Met-O), using respiratory chain electrons. Thus protects these proteins from oxidative-stress damage caused by reactive species of oxygen and chlorine generated by the host defense mechanisms. MsrPQ is essential for the maintenance of envelope integrity under bleach stress, rescuing a wide series of structurally unrelated periplasmic proteins from methionine oxidation. MsrQ provides electrons for reduction to the reductase catalytic subunit MsrP, using the quinone pool of the respiratory chain. The polypeptide is Protein-methionine-sulfoxide reductase heme-binding subunit MsrQ (Pseudomonas putida (strain ATCC 47054 / DSM 6125 / CFBP 8728 / NCIMB 11950 / KT2440)).